The sequence spans 970 residues: Unconventional myosin-XIX (970 aa).

Positions 35-758 constitute a Myosin motor domain; sequence YKLDDLTRVN…MLELLECGRA (724 aa). 132–139 is an ATP binding site; the sequence is GESGAGKT. The tract at residues 602–624 is actin-binding; the sequence is LEQLLQVLHSTTPHYIRCIKPNS. A Phosphoserine modification is found at S685. IQ domains follow at residues 759–779 and 783–812; these read RVLEQCARCIQGGWRRHRHRE and QWRAVMLIQAAIRSWLTRKHIQRLHAAATV. The interval 824 to 970 is myMOMA region; the sequence is MACLAAKELD…VTSSAFTGLG (147 aa).

This sequence belongs to the TRAFAC class myosin-kinesin ATPase superfamily. Myosin family. As to quaternary structure, myosin is a hexamer of 2 heavy chains and 4 light chains: interacts with myosin light chains MYL9 and MYL12B. Widely expressed in multiple tissues and cell lines.

It localises to the mitochondrion outer membrane. It is found in the cytoplasm. Its subcellular location is the cytoskeleton. In terms of biological role, actin-based motor molecule with ATPase activity that localizes to the mitochondrion outer membrane. Motor protein that moves towards the plus-end of actin filaments. Required for mitochondrial inheritance during mitosis. May be involved in mitochondrial transport or positioning. The protein is Unconventional myosin-XIX of Homo sapiens (Human).